The following is a 250-amino-acid chain: DNA polymerase sliding clamp (250 aa).

It belongs to the PCNA family. As to quaternary structure, homotrimer. The subunits circularize to form a toroid; DNA passes through its center. Replication factor C (RFC) is required to load the toroid on the DNA.

Sliding clamp subunit that acts as a moving platform for DNA processing. Responsible for tethering the catalytic subunit of DNA polymerase and other proteins to DNA during high-speed replication. The polypeptide is DNA polymerase sliding clamp (Methanococcus maripaludis (strain DSM 14266 / JCM 13030 / NBRC 101832 / S2 / LL)).